A 434-amino-acid chain; its full sequence is 4-hydroxy-3-methylbut-2-en-1-yl diphosphate synthase (flavodoxin) (434 aa).

Over residues 1 to 15 the composition is skewed to polar residues; that stretch reads MQSEAQSPRSSQICS. Residues 1–24 are disordered; the sequence is MQSEAQSPRSSQICSTEPVFGGHQ. Positions 322, 325, 368, and 375 each coordinate [4Fe-4S] cluster.

Belongs to the IspG family. It depends on [4Fe-4S] cluster as a cofactor.

It catalyses the reaction (2E)-4-hydroxy-3-methylbut-2-enyl diphosphate + oxidized [flavodoxin] + H2O + 2 H(+) = 2-C-methyl-D-erythritol 2,4-cyclic diphosphate + reduced [flavodoxin]. It participates in isoprenoid biosynthesis; isopentenyl diphosphate biosynthesis via DXP pathway; isopentenyl diphosphate from 1-deoxy-D-xylulose 5-phosphate: step 5/6. Functionally, converts 2C-methyl-D-erythritol 2,4-cyclodiphosphate (ME-2,4cPP) into 1-hydroxy-2-methyl-2-(E)-butenyl 4-diphosphate. The protein is 4-hydroxy-3-methylbut-2-en-1-yl diphosphate synthase (flavodoxin) of Burkholderia cenocepacia (strain ATCC BAA-245 / DSM 16553 / LMG 16656 / NCTC 13227 / J2315 / CF5610) (Burkholderia cepacia (strain J2315)).